The primary structure comprises 251 residues: Ribonuclease PH (251 aa).

Phosphate contacts are provided by residues Arg87 and 125–127; that span reads GTR.

This sequence belongs to the RNase PH family. In terms of assembly, homohexameric ring arranged as a trimer of dimers.

It catalyses the reaction tRNA(n+1) + phosphate = tRNA(n) + a ribonucleoside 5'-diphosphate. Functionally, phosphorolytic 3'-5' exoribonuclease that plays an important role in tRNA 3'-end maturation. Removes nucleotide residues following the 3'-CCA terminus of tRNAs; can also add nucleotides to the ends of RNA molecules by using nucleoside diphosphates as substrates, but this may not be physiologically important. Probably plays a role in initiation of 16S rRNA degradation (leading to ribosome degradation) during starvation. In Saccharopolyspora erythraea (strain ATCC 11635 / DSM 40517 / JCM 4748 / NBRC 13426 / NCIMB 8594 / NRRL 2338), this protein is Ribonuclease PH.